The primary structure comprises 76 residues: MLKELINKLLWHPDYNPEDYNITYLHRGAKNDEKAVPLKNIVIEDSFLVFDETHVPFHRILEIVNLKTGEILYKKR.

Belongs to the UPF0248 family.

This is UPF0248 protein MmarC7_1289 from Methanococcus maripaludis (strain C7 / ATCC BAA-1331).